The chain runs to 356 residues: UDP-N-acetylglucosamine--N-acetylmuramyl-(pentapeptide) pyrophosphoryl-undecaprenol N-acetylglucosamine transferase (356 aa).

UDP-N-acetyl-alpha-D-glucosamine-binding positions include 12 to 14 (TGG), N124, R163, S188, I242, and Q287.

This sequence belongs to the glycosyltransferase 28 family. MurG subfamily.

Its subcellular location is the cell inner membrane. It carries out the reaction di-trans,octa-cis-undecaprenyl diphospho-N-acetyl-alpha-D-muramoyl-L-alanyl-D-glutamyl-meso-2,6-diaminopimeloyl-D-alanyl-D-alanine + UDP-N-acetyl-alpha-D-glucosamine = di-trans,octa-cis-undecaprenyl diphospho-[N-acetyl-alpha-D-glucosaminyl-(1-&gt;4)]-N-acetyl-alpha-D-muramoyl-L-alanyl-D-glutamyl-meso-2,6-diaminopimeloyl-D-alanyl-D-alanine + UDP + H(+). Its pathway is cell wall biogenesis; peptidoglycan biosynthesis. In terms of biological role, cell wall formation. Catalyzes the transfer of a GlcNAc subunit on undecaprenyl-pyrophosphoryl-MurNAc-pentapeptide (lipid intermediate I) to form undecaprenyl-pyrophosphoryl-MurNAc-(pentapeptide)GlcNAc (lipid intermediate II). This chain is UDP-N-acetylglucosamine--N-acetylmuramyl-(pentapeptide) pyrophosphoryl-undecaprenol N-acetylglucosamine transferase, found in Pseudomonas savastanoi pv. phaseolicola (strain 1448A / Race 6) (Pseudomonas syringae pv. phaseolicola (strain 1448A / Race 6)).